The sequence spans 159 residues: Putative pre-16S rRNA nuclease (159 aa).

It belongs to the YqgF nuclease family.

Its subcellular location is the cytoplasm. Its function is as follows. Could be a nuclease involved in processing of the 5'-end of pre-16S rRNA. The protein is Putative pre-16S rRNA nuclease of Agrobacterium fabrum (strain C58 / ATCC 33970) (Agrobacterium tumefaciens (strain C58)).